A 154-amino-acid polypeptide reads, in one-letter code: MTHYEGDLRPPTARFAIIASRWNARITDVLVAGARQSLAGNGIGEDAIDVIRVPGAWEIPVAANRVAQSGQHGAIIALGCVIRGDTRHYEHVADLCAEGLMSVQLQTGVPVLNGVLAVERVEDAEARAGGSHGNKGEECALAALELVNLMELLP.

5-amino-6-(D-ribitylamino)uracil contacts are provided by residues tryptophan 22, 56–58 (AWE), and 80–82 (CVI). 85–86 (DT) serves as a coordination point for (2S)-2-hydroxy-3-oxobutyl phosphate. Residue histidine 88 is the Proton donor of the active site. Residue asparagine 113 participates in 5-amino-6-(D-ribitylamino)uracil binding. Arginine 127 is a binding site for (2S)-2-hydroxy-3-oxobutyl phosphate.

The protein belongs to the DMRL synthase family. As to quaternary structure, forms an icosahedral capsid composed of 60 subunits, arranged as a dodecamer of pentamers.

The enzyme catalyses (2S)-2-hydroxy-3-oxobutyl phosphate + 5-amino-6-(D-ribitylamino)uracil = 6,7-dimethyl-8-(1-D-ribityl)lumazine + phosphate + 2 H2O + H(+). It functions in the pathway cofactor biosynthesis; riboflavin biosynthesis; riboflavin from 2-hydroxy-3-oxobutyl phosphate and 5-amino-6-(D-ribitylamino)uracil: step 1/2. Catalyzes the formation of 6,7-dimethyl-8-ribityllumazine by condensation of 5-amino-6-(D-ribitylamino)uracil with 3,4-dihydroxy-2-butanone 4-phosphate. This is the penultimate step in the biosynthesis of riboflavin. In Xanthomonas oryzae pv. oryzae (strain MAFF 311018), this protein is 6,7-dimethyl-8-ribityllumazine synthase.